We begin with the raw amino-acid sequence, 408 residues long: MVQVNSNYLKLKAGYLFPEISRRVNAFCELNPTASLIRLGIGDVTEPLPQACCKAMKTAIEEMGSTSGFRGYGPEQGYLWLREAIAKNDFQSRGCQISADEIFVSDGSKCDSSNILDILGTGNKIAVTDPVYPVYVDSNVMAGQTGIAASSGHYEGLVYIPLNAENGFEAELPSEPVDLIYLCFPNNPTGAVASKVQLTKWVEYAKKNHALILFDAAYESFIQDPLLPHSIFEIDGATDCAIEFRSFSKNAGFTGTRCAFTVIPKSLKGKTLDGAEVDFWSLWNRRQSTKFNGVSYIVQRGAEAVYSLEGQSQTNKLVSFYMKNAEIIRKQLTLAGYKIYGGKHAPYVWLEAPTEMDSWQFFDHLLNKANIVGTPGSGFGVAGEGYFRLSAFNSRSNVEEAMRRITSI.

Y15 and G42 together coordinate substrate. Residues Y72, 108–109, Y132, N187, Y218, and 246–248 each bind pyridoxal 5'-phosphate; these read SK and SFS. Residues K109, Y132, and N187 each coordinate substrate. The residue at position 249 (K249) is an N6-(pyridoxal phosphate)lysine. R257 and N292 together coordinate pyridoxal 5'-phosphate. N292 and R388 together coordinate substrate.

Belongs to the class-I pyridoxal-phosphate-dependent aminotransferase family. LL-diaminopimelate aminotransferase subfamily. Homodimer. Pyridoxal 5'-phosphate serves as cofactor.

The catalysed reaction is (2S,6S)-2,6-diaminopimelate + 2-oxoglutarate = (S)-2,3,4,5-tetrahydrodipicolinate + L-glutamate + H2O + H(+). It participates in amino-acid biosynthesis; L-lysine biosynthesis via DAP pathway; LL-2,6-diaminopimelate from (S)-tetrahydrodipicolinate (aminotransferase route): step 1/1. Functionally, involved in the synthesis of meso-diaminopimelate (m-DAP or DL-DAP), required for both lysine and peptidoglycan biosynthesis. Catalyzes the direct conversion of tetrahydrodipicolinate to LL-diaminopimelate. This chain is LL-diaminopimelate aminotransferase, found in Prochlorococcus marinus (strain SARG / CCMP1375 / SS120).